A 606-amino-acid chain; its full sequence is Vitamin B12 transporter BtuB (606 aa).

Positions 1–21 (MKKTLLAVALAPLCLPSQVFA) are cleaved as a signal peptide. A TonB box motif is present at residues 28-35 (DVMVVTAN). A TBDR plug domain is found at 40–152 (PIKNVIAPIS…IGGVLNIITA (113 aa)). The 450-residue stretch at 157 to 606 (ESVAEVTAGG…SYYATATYKF (450 aa)) folds into the TBDR beta-barrel domain. Positions 589–606 (ETYNVQERSYYATATYKF) match the TonB C-terminal box motif.

This sequence belongs to the TonB-dependent receptor family. BtuB (TC 1.B.14.3.1) subfamily.

It is found in the cell outer membrane. Functionally, involved in the active translocation of vitamin B12 (cyanocobalamin) across the outer membrane to the periplasmic space. It derives its energy for transport by interacting with the trans-periplasmic membrane protein TonB. This Photobacterium profundum (strain SS9) protein is Vitamin B12 transporter BtuB.